Consider the following 329-residue polypeptide: 4-methyl-2-oxopentanoate reductase A (329 aa).

NAD(+)-binding positions include 162-163, 240-242, and D266; these read GI and TAR. R242 is an active-site residue. E271 is an active-site residue. The Proton donor role is filled by H289.

This sequence belongs to the D-isomer specific 2-hydroxyacid dehydrogenase family.

It carries out the reaction (2R)-hydroxy-4-methylpentanoate + NADP(+) = 4-methyl-2-oxopentanoate + NADPH + H(+). The catalysed reaction is a (2R)-2-hydroxycarboxylate + NADP(+) = a 2-oxocarboxylate + NADPH + H(+). Its function is as follows. 4-methyl-2-oxopentanoate (MOA) reductase that reduces MOA, a possible intermediate in leucine synthesis, to D-leucate in a NADPH- or NADH-dependent manner, but with a preference for NADPH. In addition to MOA, shows broad substrate specificity toward 2-keto acids. The chain is 4-methyl-2-oxopentanoate reductase A from Aspergillus oryzae (strain ATCC 42149 / RIB 40) (Yellow koji mold).